Reading from the N-terminus, the 551-residue chain is Pyrroline-5-carboxylate reductase 1 (551 aa).

The disordered stretch occupies residues 279 to 551; sequence LYTQKQQNKK…RHEVKTEQIN (273 aa). Composition is skewed to low complexity over residues 282 to 298, 306 to 342, 383 to 415, 424 to 441, 448 to 475, 487 to 496, and 503 to 520; these read QKQQNKKQQQLKQQQHQ, QQHQQQVQQQEPHQYQQQQQQSHQQSQYNQGHNYGHQ, QQYQQHQQPTQQESQEQTQQPEQTQSTNQSNQR, KSPQKQPQKQSQVQQPSS, QQQQQQPPQEQQQQQEQPQQPQEQQQQP, QQQQPQQQQQ, and YNNNRRGGRHYSYNNNYN. Positions 537–551 are enriched in basic and acidic residues; it reads YHDEKRHEVKTEQIN.

Belongs to the pyrroline-5-carboxylate reductase family. Homodecamer; composed of 5 homodimers.

The catalysed reaction is L-proline + NADP(+) = (S)-1-pyrroline-5-carboxylate + NADPH + 2 H(+). It carries out the reaction L-proline + NAD(+) = (S)-1-pyrroline-5-carboxylate + NADH + 2 H(+). The protein operates within amino-acid biosynthesis; L-proline biosynthesis; L-proline from L-glutamate 5-semialdehyde: step 1/1. This is Pyrroline-5-carboxylate reductase 1 (pycr1) from Dictyostelium discoideum (Social amoeba).